A 361-amino-acid chain; its full sequence is Methylthioribose-1-phosphate isomerase (361 aa).

D245 (proton donor) is an active-site residue.

Belongs to the eIF-2B alpha/beta/delta subunits family. MtnA subfamily.

It localises to the cytoplasm. The protein localises to the nucleus. It catalyses the reaction 5-(methylsulfanyl)-alpha-D-ribose 1-phosphate = 5-(methylsulfanyl)-D-ribulose 1-phosphate. It functions in the pathway amino-acid biosynthesis; L-methionine biosynthesis via salvage pathway; L-methionine from S-methyl-5-thio-alpha-D-ribose 1-phosphate: step 1/6. Catalyzes the interconversion of methylthioribose-1-phosphate (MTR-1-P) into methylthioribulose-1-phosphate (MTRu-1-P). This Monosiga brevicollis (Choanoflagellate) protein is Methylthioribose-1-phosphate isomerase.